Consider the following 524-residue polypeptide: Capsid scaffolding protein (524 aa).

Residues His47, Ser116, and His137 each act as charge relay system in the active site. Positions 268 to 287 are interaction with pAP; sequence DDLIPVPRSAFLNMLESTVS. A Nuclear localization signal motif is present at residues 359–365; that stretch reads RPRKRAR. The segment at 359 to 378 is disordered; that stretch reads RPRKRAREDPEDEVSFPGEE. Residues 504-524 form an interaction with major capsid protein region; that stretch reads AETSKAATLQKLFCDEMLSKQ.

This sequence belongs to the herpesviridae capsid scaffolding protein family. As to quaternary structure, homomultimer. Interacts with major capsid protein. In terms of assembly, exists in a monomer-dimer equilibrium with the dimer being the active species. Post-translationally, capsid scaffolding protein is cleaved by assemblin after formation of the spherical procapsid. As a result, the capsid obtains its mature, icosahedral shape. Cleavages occur at two or more sites: release (R-site) and maturation (M-site).

Its subcellular location is the host cytoplasm. It localises to the host nucleus. The catalysed reaction is Cleaves -Ala-|-Ser- and -Ala-|-Ala- bonds in the scaffold protein.. Its function is as follows. Acts as a scaffold protein by binding major capsid protein in the cytoplasm, inducing the nuclear localization of both proteins. Multimerizes in the nucleus such as major capsid protein forms the icosahedral T=16 capsid. Autocatalytic cleavage releases the assembly protein, and subsequently abolishes interaction with major capsid protein. Cleavages products are evicted from the capsid before or during DNA packaging. Protease that plays an essential role in virion assembly within the nucleus. Catalyzes the cleavage of the assembly protein after formation of the spherical procapsid. By that cleavage, the capsid matures and gains its icosahedral shape. The cleavage sites seem to include -Ala-Ser-, -Ala-Ala-, as well as Ala-Thr bonds. Assemblin and cleavages products are evicted from the capsid before or during DNA packaging. Functionally, plays a major role in capsid assembly. Acts as a scaffold protein by binding major capsid protein. Multimerizes in the nucleus such as major capsid protein forms the icosahedral T=16 capsid. Cleaved by assemblin after capsid completion. The cleavages products are evicted from the capsid before or during DNA packaging. In Connochaetes taurinus (Blue wildebeest), this protein is Capsid scaffolding protein (17).